The sequence spans 1091 residues: Sodium/potassium exporting P-type ATPase 5 (1091 aa).

Residues 1–63 (MSEGTVKENN…LGDDTKIDYK (63 aa)) lie on the Cytoplasmic side of the membrane. The chain crosses the membrane as a helical span at residues 64 to 84 (AMVLHQVCNAMIMVLVISMAI). Residues 85–90 (SFAVRD) lie on the Extracellular side of the membrane. A helical membrane pass occupies residues 91–111 (WITGGVISFVIAVNVLIGLVQ). The Cytoplasmic segment spans residues 112-282 (EYKATKTMNS…TNVGTPLHRK (171 aa)). The helical transmembrane segment at 283-303 (LSKLAVLLFWIAVLFAIIVMA) threads the bilayer. Topologically, residues 304 to 312 (SQKFDVDKR) are extracellular. The chain crosses the membrane as a helical span at residues 313-333 (VAIYAICVALSMIPSSLVVVL). Over 334–815 (TITMSVGAAV…RRMTDNIQKF (482 aa)) the chain is Cytoplasmic. Asp-369 serves as the catalytic 4-aspartylphosphate intermediate. Mg(2+)-binding residues include Asp-369 and Thr-371. Positions 371 and 483 each coordinate ATP. Residues 499–525 (ALTGEKSTNQSNENDQSSLSQHNEKPG) are disordered. Over residues 503–519 (EKSTNQSNENDQSSLSQ) the composition is skewed to polar residues. Lys-561, Arg-606, Thr-673, Gly-674, Asp-675, Arg-732, and Lys-738 together coordinate ATP. A Mg(2+)-binding site is contributed by Asp-757. Residue Asn-760 coordinates ATP. Residues 816 to 836 (VLQLLAENVAQALYLIIGLVF) traverse the membrane as a helical segment. Topologically, residues 837-848 (RDENGKSVFPLS) are extracellular. A helical membrane pass occupies residues 849–869 (PVEVLWIIVVTSCFPAMGLGL). The Cytoplasmic segment spans residues 870 to 885 (EKAAPDLMDRPPNDSE). The helical transmembrane segment at 886 to 906 (VGIFTWEVIIDTFAYGIIMTG) threads the bilayer. Residues 907–943 (SCMASFTGSLYGINSGRLGHDCDGTYNSSCRDVYRSR) lie on the Extracellular side of the membrane. Residues 944-964 (SAAFATMTWCALILAWEVVDM) traverse the membrane as a helical segment. Residues 965-991 (RRSFFRMHPDTDSPVKEFFRSIWGNQF) lie on the Cytoplasmic side of the membrane. A helical transmembrane segment spans residues 992–1012 (LFWSIIFGFVSAFPVVYIPVI). The Extracellular portion of the chain corresponds to 1013-1021 (NDKVFLHKP). Residues 1022–1042 (IGAEWGLAIAFTIAFWIGAEL) traverse the membrane as a helical segment. Over 1043 to 1091 (YKCGKRRYFKTQRAHNSENDLERSSKHDPFEAYSTSTTLQSEINISVKH) the chain is Cytoplasmic.

It belongs to the cation transport ATPase (P-type) (TC 3.A.3) family. Type IID subfamily. Mg(2+) serves as cofactor. Post-translationally, the active site is phosphorylated in presence of sodium or potassium and in conditions of higher pH. Not phosphorylated in presence of calcium ions.

Its subcellular location is the cell membrane. The catalysed reaction is Na(+)(in) + ATP + H2O = Na(+)(out) + ADP + phosphate + H(+). It carries out the reaction K(+)(in) + ATP + H2O = K(+)(out) + ADP + phosphate + H(+). Functionally, catalyzes the hydrolysis of ATP coupled with the export of sodium and potassium from the cell. May export potassium less efficiently. May transport other cations such as lithium. Sodium/potassium efflux ATPases are involved in salt tolerance and maintaining the membrane potential across the plasma membrane in high salinity (Na+) or alkaline (K+) environments. This chain is Sodium/potassium exporting P-type ATPase 5, found in Saccharomyces cerevisiae (strain ATCC 204508 / S288c) (Baker's yeast).